The chain runs to 244 residues: Small ribosomal subunit protein uS2 (244 aa).

Residues 224–244 (GQQGSDEAEEAEEAAEEVVAE) are disordered. The segment covering 229-244 (DEAEEAEEAAEEVVAE) has biased composition (acidic residues).

It belongs to the universal ribosomal protein uS2 family.

The polypeptide is Small ribosomal subunit protein uS2 (Desulfitobacterium hafniense (strain DSM 10664 / DCB-2)).